Reading from the N-terminus, the 292-residue chain is CCR4-NOT transcription complex subunit 8 (292 aa).

A divalent metal cation-binding residues include D40, E42, D161, and D230.

Belongs to the CAF1 family. Component of the CCR4-NOT complex; distinct complexes seem to exist that differ in the participation of probably mutually exclusive catalytic subunits; the complex contains two deadenylase subunits, CNOT6 or CNOT6L, and CNOT7 or CNOT8. In the complex interacts directly with CNOT1. Interacts with BTG1, BTG2 and TOB1. Interacts with BTG4.

The protein resides in the cytoplasm. The protein localises to the nucleus. It carries out the reaction Exonucleolytic cleavage of poly(A) to 5'-AMP.. Has 3'-5' poly(A) exoribonuclease activity for synthetic poly(A) RNA substrate. Its function seems to be partially redundant with that of CNOT7. Catalytic component of the CCR4-NOT complex which is linked to various cellular processes including bulk mRNA degradation, miRNA-mediated repression, translational repression during translational initiation and general transcription regulation. During miRNA-mediated repression the complex also seems to act as translational repressor during translational initiation. Additional complex functions may be a consequence of its influence on mRNA expression. Associates with members of the BTG family such as TOB1 and BTG2 and is required for their anti-proliferative activity. The sequence is that of CCR4-NOT transcription complex subunit 8 (CNOT8) from Homo sapiens (Human).